The primary structure comprises 207 residues: Imidazole glycerol phosphate synthase subunit HisH (207 aa).

Positions 1–207 (MIGIIDYGMG…KRFGQLVEGN (207 aa)) constitute a Glutamine amidotransferase type-1 domain. The active-site Nucleophile is the C79. Active-site residues include H185 and E187.

Heterodimer of HisH and HisF.

It is found in the cytoplasm. It catalyses the reaction 5-[(5-phospho-1-deoxy-D-ribulos-1-ylimino)methylamino]-1-(5-phospho-beta-D-ribosyl)imidazole-4-carboxamide + L-glutamine = D-erythro-1-(imidazol-4-yl)glycerol 3-phosphate + 5-amino-1-(5-phospho-beta-D-ribosyl)imidazole-4-carboxamide + L-glutamate + H(+). The catalysed reaction is L-glutamine + H2O = L-glutamate + NH4(+). It functions in the pathway amino-acid biosynthesis; L-histidine biosynthesis; L-histidine from 5-phospho-alpha-D-ribose 1-diphosphate: step 5/9. IGPS catalyzes the conversion of PRFAR and glutamine to IGP, AICAR and glutamate. The HisH subunit catalyzes the hydrolysis of glutamine to glutamate and ammonia as part of the synthesis of IGP and AICAR. The resulting ammonia molecule is channeled to the active site of HisF. In Shouchella clausii (strain KSM-K16) (Alkalihalobacillus clausii), this protein is Imidazole glycerol phosphate synthase subunit HisH.